The primary structure comprises 422 residues: Aspartate--tRNA(Asp/Asn) ligase (422 aa).

Glu-158 serves as a coordination point for L-aspartate. The aspartate stretch occupies residues 180-183 (QLYK). Arg-201 is an L-aspartate binding site. ATP contacts are provided by residues 201–203 (RME), 209–211 (RHL), and Glu-345. L-aspartate contacts are provided by Ser-348 and Arg-352. 393–396 (GAER) provides a ligand contact to ATP.

The protein belongs to the class-II aminoacyl-tRNA synthetase family. Type 2 subfamily. Homodimer. Makes part of a ribonucleoprotein particle (RNP) called transamidosome that allows channelling of the aa-tRNA from non-discriminating aspartyl-tRNA synthetase active site to the GatCAB amidotransferase site. The transamidosome complex is formed by two GatCABs, one dimeric ND-AspRSs and two tRNAs(Asn) molecules.

The protein resides in the cytoplasm. It carries out the reaction tRNA(Asx) + L-aspartate + ATP = L-aspartyl-tRNA(Asx) + AMP + diphosphate. Functionally, aspartyl-tRNA synthetase with relaxed tRNA specificity since it is able to aspartylate not only its cognate tRNA(Asp) but also tRNA(Asn) with similar efficiencies. Reaction proceeds in two steps: L-aspartate is first activated by ATP to form Asp-AMP and then transferred to the acceptor end of tRNA(Asp/Asn). The chain is Aspartate--tRNA(Asp/Asn) ligase (aspS2) from Thermus thermophilus (strain ATCC 27634 / DSM 579 / HB8).